We begin with the raw amino-acid sequence, 499 residues long: Glycerol kinase (499 aa).

Residue threonine 13 coordinates ADP. Residues threonine 13, threonine 14, and serine 15 each coordinate ATP. Position 13 (threonine 13) interacts with sn-glycerol 3-phosphate. Arginine 17 contacts ADP. Residues arginine 83, glutamate 84, tyrosine 135, and aspartate 244 each coordinate sn-glycerol 3-phosphate. Arginine 83, glutamate 84, tyrosine 135, aspartate 244, and glutamine 245 together coordinate glycerol. The ADP site is built by threonine 266 and glycine 310. The ATP site is built by threonine 266, glycine 310, glutamine 314, and glycine 411. ADP is bound by residues glycine 411 and asparagine 415.

This sequence belongs to the FGGY kinase family.

It carries out the reaction glycerol + ATP = sn-glycerol 3-phosphate + ADP + H(+). The protein operates within polyol metabolism; glycerol degradation via glycerol kinase pathway; sn-glycerol 3-phosphate from glycerol: step 1/1. Its activity is regulated as follows. Inhibited by fructose 1,6-bisphosphate (FBP). Its function is as follows. Key enzyme in the regulation of glycerol uptake and metabolism. Catalyzes the phosphorylation of glycerol to yield sn-glycerol 3-phosphate. This is Glycerol kinase from Pseudothermotoga lettingae (strain ATCC BAA-301 / DSM 14385 / NBRC 107922 / TMO) (Thermotoga lettingae).